The primary structure comprises 225 residues: MSKRYFVTGTDTEVGKTVASCALLQAAKAAGYRTAGYKPVASGSEKTPEGLRNSDALALQRNSSLQLDYATVNPYTFAEPTSPHIISAQEGRSIESSVMSSGLRALEQQADWVLVEGAGGWFTPLSDTFTFADWVTQEQLPVILVVGVKLGCINHAMLTAQAIQHAGLTLAGWVANDVTPPGKRHAEYMTTLTRMIPAPLLGESPWLAENPENAATGKYINLALL.

Residue 13-18 (EVGKTV) participates in ATP binding. Thr17 is a binding site for Mg(2+). Residue Lys38 is part of the active site. Ser42 lines the substrate pocket. Residues Asp55, 116–119 (EGAG), 176–177 (ND), 205–207 (PWL), and Glu212 contribute to the ATP site. Asp55 and Glu116 together coordinate Mg(2+).

The protein belongs to the dethiobiotin synthetase family. Homodimer. Mg(2+) is required as a cofactor.

It is found in the cytoplasm. The enzyme catalyses (7R,8S)-7,8-diammoniononanoate + CO2 + ATP = (4R,5S)-dethiobiotin + ADP + phosphate + 3 H(+). It participates in cofactor biosynthesis; biotin biosynthesis; biotin from 7,8-diaminononanoate: step 1/2. In terms of biological role, catalyzes a mechanistically unusual reaction, the ATP-dependent insertion of CO2 between the N7 and N8 nitrogen atoms of 7,8-diaminopelargonic acid (DAPA, also called 7,8-diammoniononanoate) to form a ureido ring. The protein is ATP-dependent dethiobiotin synthetase BioD 1 of Escherichia coli O157:H7.